The chain runs to 684 residues: ATP-dependent DNA helicase RecG (684 aa).

The interval 51-148 is wedge domain; sequence RHIASMATLQ…ADVPQFQAPH (98 aa). Residues 278–439 enclose the Helicase ATP-binding domain; sequence DLARHRPMRR…VHADLEVSVI (162 aa). ATP is bound at residue 291–298; that stretch reads GDVGSGKT. The DEAH box signature appears at 392 to 395; it reads DEQH.

It belongs to the helicase family. RecG subfamily. As to quaternary structure, monomer.

It carries out the reaction Couples ATP hydrolysis with the unwinding of duplex DNA by translocating in the 3'-5' direction.. It catalyses the reaction ATP + H2O = ADP + phosphate + H(+). Its function is as follows. Plays a critical role in recombination and DNA repair. Helps process Holliday junction intermediates to mature products by catalyzing branch migration. Has replication fork regression activity, unwinds stalled or blocked replication forks to make a HJ that can be resolved. Has a DNA unwinding activity characteristic of a DNA helicase with 3'-5' polarity. This Acidithiobacillus ferridurans protein is ATP-dependent DNA helicase RecG.